The primary structure comprises 478 residues: Glutamyl-tRNA(Gln) amidotransferase subunit A 2 (478 aa).

Residues Lys79 and Ser154 each act as charge relay system in the active site. Ser178 functions as the Acyl-ester intermediate in the catalytic mechanism.

Belongs to the amidase family. GatA subfamily. In terms of assembly, heterotrimer of A, B and C subunits.

It catalyses the reaction L-glutamyl-tRNA(Gln) + L-glutamine + ATP + H2O = L-glutaminyl-tRNA(Gln) + L-glutamate + ADP + phosphate + H(+). Functionally, allows the formation of correctly charged Gln-tRNA(Gln) through the transamidation of misacylated Glu-tRNA(Gln) in organisms which lack glutaminyl-tRNA synthetase. The reaction takes place in the presence of glutamine and ATP through an activated gamma-phospho-Glu-tRNA(Gln). The sequence is that of Glutamyl-tRNA(Gln) amidotransferase subunit A 2 (gatA2) from Clostridium acetobutylicum (strain ATCC 824 / DSM 792 / JCM 1419 / IAM 19013 / LMG 5710 / NBRC 13948 / NRRL B-527 / VKM B-1787 / 2291 / W).